The chain runs to 359 residues: Fructose-bisphosphate aldolase (359 aa).

Thr-11 carries the post-translational modification Phosphothreonine. Lys-27 participates in a covalent cross-link: Glycyl lysine isopeptide (Lys-Gly) (interchain with G-Cter in ubiquitin). Phosphoserine is present on residues Ser-56 and Ser-63. Ser-63 contributes to the D-glyceraldehyde 3-phosphate binding site. Lys-73 participates in a covalent cross-link: Glycyl lysine isopeptide (Lys-Gly) (interchain with G-Cter in ubiquitin). A phosphoserine mark is found at Ser-76 and Ser-83. Lys-85 is covalently cross-linked (Glycyl lysine isopeptide (Lys-Gly) (interchain with G-Cter in ubiquitin)). The residue at position 96 (Ser-96) is a Phosphoserine. Asp-110 serves as the catalytic Proton donor. Residues His-111 and Asp-145 each coordinate Zn(2+). Ser-147 is modified (phosphoserine). Thr-150 carries the post-translational modification Phosphothreonine. Glu-175 is a binding site for Zn(2+). Thr-179 is modified (phosphothreonine). Residue His-227 participates in Zn(2+) binding. A dihydroxyacetone phosphate-binding site is contributed by Gly-228. Residue His-265 coordinates Zn(2+). Residues 266-268 and 287-290 each bind dihydroxyacetone phosphate; these read GGS and NLDT. Ser-268 carries the post-translational modification Phosphoserine. Thr-290 is subject to Phosphothreonine. A Glycyl lysine isopeptide (Lys-Gly) (interchain with G-Cter in ubiquitin) cross-link involves residue Lys-308. Tyr-310 carries the phosphotyrosine modification. Ser-313 is subject to Phosphoserine.

Belongs to the class II fructose-bisphosphate aldolase family. As to quaternary structure, homodimer. It depends on Zn(2+) as a cofactor.

The enzyme catalyses beta-D-fructose 1,6-bisphosphate = D-glyceraldehyde 3-phosphate + dihydroxyacetone phosphate. It functions in the pathway carbohydrate degradation; glycolysis; D-glyceraldehyde 3-phosphate and glycerone phosphate from D-glucose: step 4/4. Functionally, catalyzes the aldol condensation of dihydroxyacetone phosphate (DHAP or glycerone-phosphate) with glyceraldehyde 3-phosphate (G3P) to form fructose 1,6-bisphosphate (FBP) in gluconeogenesis and the reverse reaction in glycolysis. This chain is Fructose-bisphosphate aldolase (FBA1), found in Saccharomyces cerevisiae (strain ATCC 204508 / S288c) (Baker's yeast).